The sequence spans 167 residues: Claudin domain-containing protein 2 (167 aa).

The next 4 membrane-spanning stretches (helical) occupy residues 13 to 32 (LLNLLSSILTVLSTTTNYWT), 61 to 81 (VSAACMVLAATFSIVALGIGI), 96 to 116 (TIVLLFLSGLLLLIALAVYTS), and 130 to 150 (YFFGWLALPFLFIAGFCFLLA).

Belongs to the PMP-22/EMP/MP20 family.

Its subcellular location is the membrane. This Mus musculus (Mouse) protein is Claudin domain-containing protein 2 (Cldnd2).